Consider the following 352-residue polypeptide: Chorismate synthase (352 aa).

Residues Arg-48 and Arg-54 each contribute to the NADP(+) site. FMN is bound by residues 125 to 127 (RSS), 238 to 239 (NA), Gly-278, 293 to 297 (KPTSS), and Arg-319.

This sequence belongs to the chorismate synthase family. As to quaternary structure, homotetramer. The cofactor is FMNH2.

It carries out the reaction 5-O-(1-carboxyvinyl)-3-phosphoshikimate = chorismate + phosphate. The protein operates within metabolic intermediate biosynthesis; chorismate biosynthesis; chorismate from D-erythrose 4-phosphate and phosphoenolpyruvate: step 7/7. In terms of biological role, catalyzes the anti-1,4-elimination of the C-3 phosphate and the C-6 proR hydrogen from 5-enolpyruvylshikimate-3-phosphate (EPSP) to yield chorismate, which is the branch point compound that serves as the starting substrate for the three terminal pathways of aromatic amino acid biosynthesis. This reaction introduces a second double bond into the aromatic ring system. This Bordetella petrii (strain ATCC BAA-461 / DSM 12804 / CCUG 43448) protein is Chorismate synthase.